The primary structure comprises 443 residues: Phenylalanine--tRNA ligase alpha subunit (443 aa).

Residues Thr-332, 375–377 (QVE), and Tyr-415 each bind L-phenylalanine. Mg(2+) is bound at residue Glu-417. Phe-441 lines the L-phenylalanine pocket.

This sequence belongs to the class-II aminoacyl-tRNA synthetase family. Phe-tRNA synthetase alpha subunit type 2 subfamily. Heterotetramer; dimer of two heterodimers formed by FARSA and FARSB. The cofactor is Mg(2+).

It localises to the cytoplasm. The enzyme catalyses tRNA(Phe) + L-phenylalanine + ATP = L-phenylalanyl-tRNA(Phe) + AMP + diphosphate + H(+). This Gallus gallus (Chicken) protein is Phenylalanine--tRNA ligase alpha subunit (FARSA).